Consider the following 799-residue polypeptide: Protein translocase subunit SecA (799 aa).

ATP-binding positions include Gln-85, Gly-103 to Thr-107, and Asp-504.

The protein belongs to the SecA family. In terms of assembly, monomer and homodimer. Part of the essential Sec protein translocation apparatus which comprises SecA, SecYEG and auxiliary proteins SecDF. Other proteins may also be involved.

The protein resides in the cell membrane. Its subcellular location is the cytoplasm. It carries out the reaction ATP + H2O + cellular proteinSide 1 = ADP + phosphate + cellular proteinSide 2.. Its function is as follows. Part of the Sec protein translocase complex. Interacts with the SecYEG preprotein conducting channel. Has a central role in coupling the hydrolysis of ATP to the transfer of proteins into and across the cell membrane, serving as an ATP-driven molecular motor driving the stepwise translocation of polypeptide chains across the membrane. This Lactobacillus gasseri (strain ATCC 33323 / DSM 20243 / BCRC 14619 / CIP 102991 / JCM 1131 / KCTC 3163 / NCIMB 11718 / NCTC 13722 / AM63) protein is Protein translocase subunit SecA.